The chain runs to 505 residues: Lysine--tRNA ligase (505 aa).

Mg(2+) is bound by residues Glu415 and Glu422.

The protein belongs to the class-II aminoacyl-tRNA synthetase family. As to quaternary structure, homodimer. Mg(2+) is required as a cofactor.

Its subcellular location is the cytoplasm. The enzyme catalyses tRNA(Lys) + L-lysine + ATP = L-lysyl-tRNA(Lys) + AMP + diphosphate. In Yersinia enterocolitica serotype O:8 / biotype 1B (strain NCTC 13174 / 8081), this protein is Lysine--tRNA ligase.